Consider the following 158-residue polypeptide: Mitotic-spindle organizing protein 2B (158 aa).

Serine 34 is modified (phosphoserine). Residues 84 to 158 (RLASEPQDPA…PGKSPTRGST (75 aa)) form a disordered region. Residues 111-122 (GSAALGGALALA) show a composition bias toward low complexity. Positions 128-140 (EGSSQRMPRQPSA) are enriched in polar residues. Position 152 is a phosphoserine (serine 152).

Belongs to the MOZART2 family. Associates with the gamma-tubulin ring complex (gTuRC) consisting of TUBGCP2, TUBGCP3, TUBGCP4, TUBGCP5 and TUBGCP6 and gamma-tubulin TUBG1 or TUBG2; within the complex, interacts with TUBGCP2; the interaction plays a role in gTuRC activation. Interacts with TUBG1.

It is found in the cytoplasm. It localises to the cytoskeleton. Its subcellular location is the microtubule organizing center. The protein resides in the centrosome. The protein localises to the spindle. Functionally, required for the recruitment and the assembly of the gamma-tubulin ring complex (gTuRC) at the centrosome. The gTuRC regulates the minus-end nucleation of alpha-beta tubulin heterodimers that grow into microtubule protafilaments, a critical step in centrosome duplication and spindle formation. In Homo sapiens (Human), this protein is Mitotic-spindle organizing protein 2B (MZT2B).